The chain runs to 219 residues: Probable GTP-binding protein EngB (219 aa).

Positions 42–219 (SVPEIAFAGR…RTAVLEAVEL (178 aa)) constitute an EngB-type G domain. Residues 50–57 (GRSNVGKS), 77–81 (GRTQE), 97–100 (DMPG), 164–167 (TKAD), and 198–200 (TSS) contribute to the GTP site. Positions 57 and 79 each coordinate Mg(2+).

It belongs to the TRAFAC class TrmE-Era-EngA-EngB-Septin-like GTPase superfamily. EngB GTPase family. Mg(2+) is required as a cofactor.

Functionally, necessary for normal cell division and for the maintenance of normal septation. This is Probable GTP-binding protein EngB from Sphingopyxis alaskensis (strain DSM 13593 / LMG 18877 / RB2256) (Sphingomonas alaskensis).